The following is a 66-amino-acid chain: Large ribosomal subunit protein bL35 (66 aa).

Basic residues-rich tracts occupy residues 1 to 15 (MPKL…KRFK) and 28 to 45 (TKRH…RTRR). Residues 1 to 49 (MPKLKTKSSAKKRFKVTASGRVMSAQSTKRHGMTKRSKRSLRTRRGIAQ) form a disordered region.

Belongs to the bacterial ribosomal protein bL35 family.

This Anaplasma marginale (strain Florida) protein is Large ribosomal subunit protein bL35.